The primary structure comprises 601 residues: Aspartate--tRNA(Asp/Asn) ligase (601 aa).

Position 174 (Glu-174) interacts with L-aspartate. Positions 198–201 (QLFK) are aspartate. An L-aspartate-binding site is contributed by Arg-220. ATP-binding positions include 220–222 (RDE) and Gln-229. L-aspartate is bound at residue His-459. Glu-493 provides a ligand contact to ATP. Residue Arg-500 participates in L-aspartate binding. 545-548 (GLDR) lines the ATP pocket.

Belongs to the class-II aminoacyl-tRNA synthetase family. Type 1 subfamily. As to quaternary structure, homodimer.

Its subcellular location is the cytoplasm. The catalysed reaction is tRNA(Asx) + L-aspartate + ATP = L-aspartyl-tRNA(Asx) + AMP + diphosphate. In terms of biological role, aspartyl-tRNA synthetase with relaxed tRNA specificity since it is able to aspartylate not only its cognate tRNA(Asp) but also tRNA(Asn). Reaction proceeds in two steps: L-aspartate is first activated by ATP to form Asp-AMP and then transferred to the acceptor end of tRNA(Asp/Asn). This is Aspartate--tRNA(Asp/Asn) ligase from Variovorax paradoxus (strain S110).